The sequence spans 453 residues: tRNA modification GTPase MnmE (453 aa).

(6S)-5-formyl-5,6,7,8-tetrahydrofolate contacts are provided by R22, E79, and K119. Residues 215 to 376 (GMKVVIAGRP…LRNHLKECMG (162 aa)) form the TrmE-type G domain. N225 serves as a coordination point for K(+). GTP is bound by residues 225 to 230 (NAGKSS), 244 to 250 (TDIAGTT), 269 to 272 (DTAG), and 334 to 337 (NKAD). S229 provides a ligand contact to Mg(2+). Residues T244, I246, and T249 each contribute to the K(+) site. T250 is a binding site for Mg(2+). Position 453 (K453) interacts with (6S)-5-formyl-5,6,7,8-tetrahydrofolate.

Belongs to the TRAFAC class TrmE-Era-EngA-EngB-Septin-like GTPase superfamily. TrmE GTPase family. In terms of assembly, homodimer. Heterotetramer of two MnmE and two MnmG subunits. Requires K(+) as cofactor.

Its subcellular location is the cytoplasm. In terms of biological role, exhibits a very high intrinsic GTPase hydrolysis rate. Involved in the addition of a carboxymethylaminomethyl (cmnm) group at the wobble position (U34) of certain tRNAs, forming tRNA-cmnm(5)s(2)U34. In Vibrio vulnificus (strain YJ016), this protein is tRNA modification GTPase MnmE.